The chain runs to 164 residues: Interleukin-36 beta (164 aa).

Positions 1-4 are excised as a propeptide; the sequence is MNPQ.

It belongs to the IL-1 family. Interacts with cargo receptor TMED10; the interaction mediates the translocation from the cytoplasm into the ERGIC (endoplasmic reticulum-Golgi intermediate compartment) and thereby secretion. Post-translationally, N-terminal truncation leads to a dramatic enhancement of its activity (&gt;1000-fold). In terms of tissue distribution, expression at low levels in tonsil, bone marrow, heart, placenta, lung, testis and colon but not in any hematopoietic cell lines. Not detected in adipose tissue. Expressed at higher levels in psoriatic plaques than in symptomless psoriatic skin or healthy control skin. Increased levels are not detected in inflamed joint tissue.

The protein resides in the cytoplasm. The protein localises to the secreted. Cytokine that binds to and signals through the IL1RL2/IL-36R receptor which in turn activates NF-kappa-B and MAPK signaling pathways in target cells linked to a pro-inflammatory response. Part of the IL-36 signaling system that is thought to be present in epithelial barriers and to take part in local inflammatory response; similar to the IL-1 system with which it shares the coreceptor IL1RAP. Stimulates production of interleukin-6 and interleukin-8 in synovial fibrobasts, articular chondrocytes and mature adipocytes. Induces expression of a number of antimicrobial peptides including beta-defensins 4 and 103 as well as a number of matrix metalloproteases. Seems to be involved in skin inflammatory response by acting on keratinocytes, dendritic cells and indirectly on T-cells to drive tissue infiltration, cell maturation and cell proliferation. In cultured keratinocytes induces the expression of macrophage, T-cell, and neutrophil chemokines, such as CCL3, CCL4, CCL5, CCL2, CCL17, CCL22, CL20, CCL5, CCL2, CCL17, CCL22, CXCL8, CCL20 and CXCL1, and the production of pro-inflammatory cytokines such as TNF-alpha, IL-8 and IL-6. This chain is Interleukin-36 beta, found in Homo sapiens (Human).